We begin with the raw amino-acid sequence, 210 residues long: Ion-translocating oxidoreductase complex subunit G (210 aa).

Residues 9–29 (SLVLALFAIAATALVTITYAL) traverse the membrane as a helical segment. T176 carries the FMN phosphoryl threonine modification.

This sequence belongs to the RnfG family. In terms of assembly, the complex is composed of six subunits: RnfA, RnfB, RnfC, RnfD, RnfE and RnfG. Requires FMN as cofactor.

Its subcellular location is the cell inner membrane. Functionally, part of a membrane-bound complex that couples electron transfer with translocation of ions across the membrane. In Aliivibrio fischeri (strain MJ11) (Vibrio fischeri), this protein is Ion-translocating oxidoreductase complex subunit G.